Here is a 295-residue protein sequence, read N- to C-terminus: Probable adenylate kinase 6, chloroplastic (295 aa).

The transit peptide at 1 to 46 (MAVSHRLLRPATTTIKNTFSSLFIRSLSSSSSGSSLDPKIDLEEAA) directs the protein to the chloroplast. Position 74–79 (74–79 (GVGKGT)) interacts with ATP. The NMP stretch occupies residues 94-123 (ATGDLVREELSSSGLLSSQLKELVNHGKLV). AMP-binding positions include Thr-95, Arg-100, 121 to 123 (KLV), 151 to 154 (GFPR), and Gln-158. The LID stretch occupies residues 187 to 235 (GRRICSECGGNYNVACIDIKGDDDTPRMYMPPLLPPPNCESKLISRADD). Arg-188 lines the ATP pocket. Arg-243 is an AMP binding site. Residue Gly-271 coordinates ATP.

The protein belongs to the adenylate kinase family. As to quaternary structure, monomer.

The protein resides in the plastid. Its subcellular location is the chloroplast. It carries out the reaction AMP + ATP = 2 ADP. Functionally, catalyzes the reversible transfer of the terminal phosphate group between ATP and AMP. Plays an important role in cellular energy homeostasis and in adenine nucleotide metabolism. In Arabidopsis thaliana (Mouse-ear cress), this protein is Probable adenylate kinase 6, chloroplastic.